Reading from the N-terminus, the 367-residue chain is Phosphoribosylaminoimidazole-succinocarboxamide synthase (367 aa).

The protein belongs to the SAICAR synthetase family.

It carries out the reaction 5-amino-1-(5-phospho-D-ribosyl)imidazole-4-carboxylate + L-aspartate + ATP = (2S)-2-[5-amino-1-(5-phospho-beta-D-ribosyl)imidazole-4-carboxamido]succinate + ADP + phosphate + 2 H(+). The protein operates within purine metabolism; IMP biosynthesis via de novo pathway; 5-amino-1-(5-phospho-D-ribosyl)imidazole-4-carboxamide from 5-amino-1-(5-phospho-D-ribosyl)imidazole-4-carboxylate: step 1/2. In Vibrio atlanticus (strain LGP32) (Vibrio splendidus (strain Mel32)), this protein is Phosphoribosylaminoimidazole-succinocarboxamide synthase.